The sequence spans 265 residues: Probable trehalose-phosphate phosphatase (265 aa).

D35 functions as the Nucleophile in the catalytic mechanism. Mg(2+)-binding residues include D35, D37, and D213. A substrate-binding site is contributed by 35–37 (DID).

The protein belongs to the trehalose phosphatase family. The cofactor is Mg(2+).

It carries out the reaction alpha,alpha-trehalose 6-phosphate + H2O = alpha,alpha-trehalose + phosphate. It participates in glycan biosynthesis; trehalose biosynthesis. In terms of biological role, removes the phosphate from trehalose 6-phosphate to produce free trehalose. The sequence is that of Probable trehalose-phosphate phosphatase (otsB) from Sinorhizobium fredii (strain NBRC 101917 / NGR234).